A 253-amino-acid chain; its full sequence is Uridine phosphorylase (253 aa).

This sequence belongs to the PNP/UDP phosphorylase family. As to quaternary structure, homohexamer.

Its subcellular location is the cytoplasm. It carries out the reaction uridine + phosphate = alpha-D-ribose 1-phosphate + uracil. The protein operates within pyrimidine metabolism; UMP biosynthesis via salvage pathway; uracil from uridine (phosphorylase route): step 1/1. Functionally, catalyzes the reversible phosphorylytic cleavage of uridine to uracil and ribose-1-phosphate. Shows weak activity towards deoxyuridine and thymidine. The produced molecules are then utilized as carbon and energy sources or in the rescue of pyrimidine bases for nucleotide synthesis. This is Uridine phosphorylase from Escherichia coli (strain K12).